The chain runs to 426 residues: Chaperone SurA (426 aa).

The N-terminal stretch at M1–A19 is a signal peptide. PpiC domains follow at residues D169–D270 and V280–D379.

The protein resides in the periplasm. The enzyme catalyses [protein]-peptidylproline (omega=180) = [protein]-peptidylproline (omega=0). Chaperone involved in the correct folding and assembly of outer membrane proteins. Recognizes specific patterns of aromatic residues and the orientation of their side chains, which are found more frequently in integral outer membrane proteins. May act in both early periplasmic and late outer membrane-associated steps of protein maturation. This chain is Chaperone SurA, found in Nitrosococcus oceani (strain ATCC 19707 / BCRC 17464 / JCM 30415 / NCIMB 11848 / C-107).